We begin with the raw amino-acid sequence, 81 residues long: Cytotoxin 5b (81 aa).

The signal sequence occupies residues 1 to 21; the sequence is MKTLLLTLLVVTIVCLDLGYT. Cystine bridges form between cysteine 24–cysteine 42, cysteine 35–cysteine 59, cysteine 63–cysteine 74, and cysteine 75–cysteine 80.

The protein belongs to the three-finger toxin family. Short-chain subfamily. Type IA cytotoxin sub-subfamily. Monomer in solution; Homodimer and oligomer in the presence of negatively charged lipids forming a pore with a size ranging between 20 and 30 Angstroms. In terms of tissue distribution, expressed by the venom gland.

It is found in the secreted. It localises to the target cell membrane. Its function is as follows. Shows cytolytic activity on many different cells by forming pore in lipid membranes. In vivo, increases heart rate or kills the animal by cardiac arrest. In addition, it binds to heparin with high affinity, interacts with Kv channel-interacting protein 1 (KCNIP1) in a calcium-independent manner, and binds to integrin alpha-V/beta-3 (ITGAV/ITGB3) with moderate affinity. In Naja sputatrix (Malayan spitting cobra), this protein is Cytotoxin 5b.